Reading from the N-terminus, the 462-residue chain is Light-independent protochlorophyllide reductase subunit N (462 aa).

Residues Cys24, Cys49, and Cys109 each coordinate [4Fe-4S] cluster.

This sequence belongs to the BchN/ChlN family. In terms of assembly, protochlorophyllide reductase is composed of three subunits; ChlL, ChlN and ChlB. Forms a heterotetramer of two ChlB and two ChlN subunits. It depends on [4Fe-4S] cluster as a cofactor.

The protein resides in the plastid. Its subcellular location is the chloroplast. It carries out the reaction chlorophyllide a + oxidized 2[4Fe-4S]-[ferredoxin] + 2 ADP + 2 phosphate = protochlorophyllide a + reduced 2[4Fe-4S]-[ferredoxin] + 2 ATP + 2 H2O. It functions in the pathway porphyrin-containing compound metabolism; chlorophyll biosynthesis (light-independent). Component of the dark-operative protochlorophyllide reductase (DPOR) that uses Mg-ATP and reduced ferredoxin to reduce ring D of protochlorophyllide (Pchlide) to form chlorophyllide a (Chlide). This reaction is light-independent. The NB-protein (ChlN-ChlB) is the catalytic component of the complex. This is Light-independent protochlorophyllide reductase subunit N from Pleurastrum terricola (Filamentous green alga).